A 25-amino-acid chain; its full sequence is Phospholipase A1 verutoxin-2a (25 aa).

The protein belongs to the AB hydrolase superfamily. Lipase family. Post-translationally, contains six disulfide bonds. As to expression, expressed by the venom gland.

It localises to the secreted. It carries out the reaction a 1,2-diacyl-sn-glycero-3-phosphocholine + H2O = a 2-acyl-sn-glycero-3-phosphocholine + a fatty acid + H(+). The catalysed reaction is 1-(9Z-octadecenoyl)-2-hexadecanoyl-sn-glycero-3-phosphocholine + H2O = 2-hexadecanoyl-sn-glycero-3-phosphocholine + (9Z)-octadecenoate + H(+). The enzyme catalyses a 1-acyl-sn-glycero-3-phosphocholine + H2O = sn-glycerol 3-phosphocholine + a fatty acid + H(+). It functions in the pathway phospholipid metabolism. Its activity is regulated as follows. Activity is maximal in the presence of calcium. However, unlike phospholipases A2 whose catalytic activity is strictly calcium-dependent, this enzyme shows considerable catalytic activity on phosphatidylcholine emulsified in calcium free solution; the catalytic activity of VT-2a assayed in the absence of calcium ions is 18-20% of that assayed in solution containing calcium ions. Functionally, catalyzes the hydrolysis of glycerophospholipids such as phosphatidylcholine (1,2-diacyl-sn-glycero-3-phosphocholine) and has a moderate activity to hydrolyze lysoglycerophospholipids such as lysophosphatidylcholine (1-acyl-sn-glycero-3-phosphocholine), but is unable to hydrolyze sphingomyelin. In addition to acting as an allergen, it possesses a potent hemolytic activity on red blood cells of mice (98.8% of hemolysis at 3.0 ug/ml). The sequence is that of Phospholipase A1 verutoxin-2a from Vespa velutina (Asian yellow-legged hornet).